The following is a 503-amino-acid chain: ATP synthase subunit alpha (503 aa).

Residue 169 to 176 coordinates ATP; it reads GDRQTGKT.

This sequence belongs to the ATPase alpha/beta chains family. F-type ATPases have 2 components, CF(1) - the catalytic core - and CF(0) - the membrane proton channel. CF(1) has five subunits: alpha(3), beta(3), gamma(1), delta(1), epsilon(1). CF(0) has three main subunits: a(1), b(2) and c(9-12). The alpha and beta chains form an alternating ring which encloses part of the gamma chain. CF(1) is attached to CF(0) by a central stalk formed by the gamma and epsilon chains, while a peripheral stalk is formed by the delta and b chains.

The protein localises to the cell membrane. It catalyses the reaction ATP + H2O + 4 H(+)(in) = ADP + phosphate + 5 H(+)(out). Produces ATP from ADP in the presence of a proton gradient across the membrane. The alpha chain is a regulatory subunit. The protein is ATP synthase subunit alpha of Staphylococcus epidermidis (strain ATCC 35984 / DSM 28319 / BCRC 17069 / CCUG 31568 / BM 3577 / RP62A).